The following is a 427-amino-acid chain: 3-phosphoshikimate 1-carboxyvinyltransferase (427 aa).

Positions 22, 23, and 27 each coordinate 3-phosphoshikimate. Position 22 (Lys-22) interacts with phosphoenolpyruvate. 2 residues coordinate phosphoenolpyruvate: Gly-96 and Arg-124. 3-phosphoshikimate is bound by residues Ser-169, Ser-170, Gln-171, Ser-197, Asp-313, Asn-336, and Lys-340. Gln-171 serves as a coordination point for phosphoenolpyruvate. Residue Asp-313 is the Proton acceptor of the active site. Residues Arg-344, Arg-386, and Lys-411 each coordinate phosphoenolpyruvate.

The protein belongs to the EPSP synthase family. As to quaternary structure, monomer.

It is found in the cytoplasm. It catalyses the reaction 3-phosphoshikimate + phosphoenolpyruvate = 5-O-(1-carboxyvinyl)-3-phosphoshikimate + phosphate. It functions in the pathway metabolic intermediate biosynthesis; chorismate biosynthesis; chorismate from D-erythrose 4-phosphate and phosphoenolpyruvate: step 6/7. Its function is as follows. Catalyzes the transfer of the enolpyruvyl moiety of phosphoenolpyruvate (PEP) to the 5-hydroxyl of shikimate-3-phosphate (S3P) to produce enolpyruvyl shikimate-3-phosphate and inorganic phosphate. The polypeptide is 3-phosphoshikimate 1-carboxyvinyltransferase (Shigella flexneri serotype 5b (strain 8401)).